The chain runs to 1055 residues: Focal adhesion kinase 1 (1055 aa).

Residues 1–29 (MAAAYLDPNLNHTPSSSTKTHLGTGTERS) form a disordered region. Ala2 is subject to N-acetylalanine. The residue at position 5 (Tyr5) is a Phosphotyrosine. Over residues 10 to 27 (LNHTPSSSTKTHLGTGTE) the composition is skewed to polar residues. Phosphothreonine is present on Thr13. Phosphoserine occurs at positions 29 and 54. The FERM domain maps to 35–355 (RVLKVFHYFE…GYCRLVNGAT (321 aa)). A Glycyl lysine isopeptide (Lys-Gly) (interchain with G-Cter in SUMO) cross-link involves residue Lys152. Tyr397 is subject to Phosphotyrosine; by autocatalysis. Tyr407 carries the post-translational modification Phosphotyrosine. One can recognise a Protein kinase domain in the interval 422 to 680 (IELGRCIGEG…ELKAQLSTIL (259 aa)). Residues 428 to 434 (IGEGQFG), Lys454, and 500 to 502 (ELC) contribute to the ATP site. The Proton acceptor role is filled by Asp546. Phosphotyrosine occurs at positions 570 and 576. Position 577 is a phosphotyrosine; by RET and SRC (Tyr577). The residue at position 580 (Ser580) is a Phosphoserine. Positions 685–697 (VQQEERMRMESRR) are enriched in basic and acidic residues. Disordered regions lie at residues 685 to 734 (VQQE…PSPQ) and 837 to 923 (VRLS…LDRS). An interaction with TGFB1I1 region spans residues 707–1055 (GSDEAPPKPS…LKMLGQTRPH (349 aa)). Phosphoserine is present on Ser722. Ser732 carries the post-translational modification Phosphoserine; by CDK5. Residues 837 to 849 (VRLSRGSIDREDG) show a composition bias toward basic and acidic residues. Ser843 is subject to Phosphoserine. A Phosphotyrosine modification is found at Tyr861. Positions 869 to 880 (PAAPPKKPPRPG) are enriched in pro residues. Polar residues predominate over residues 886-896 (SNLSSISSPAE). The residue at position 913 (Ser913) is a Phosphoserine. The tract at residues 915-1055 (PPTANLDRSN…LKMLGQTRPH (141 aa)) is interaction with ARHGEF28. Residue Thr917 is modified to Phosphothreonine. Tyr928 is subject to Phosphotyrosine.

The protein belongs to the protein kinase superfamily. Tyr protein kinase family. FAK subfamily. In terms of assembly, interacts with GIT1. Component of a complex that contains at least FER, CTTN and PTK2/FAK1. Interacts with BMX. Interacts with STEAP4. Interacts with ZFYVE21. Interacts with ESR1. Interacts with PIK3R1 or PIK3R2. Interacts with FGR, FLT4 and RET. Interacts with EPHA2 in resting cells; activation of EPHA2 recruits PTPN11, leading to dephosphorylation of PTK2/FAK1 and dissociation of the complex. Interacts with EPHA1 (kinase activity-dependent). Interacts with P53/TP53. Interacts (via first Pro-rich region) with CAS family members (via SH3 domain), including BCAR1, BCAR3, and CASS4. Interacts with NEDD9 (via SH3 domain). Interacts with TGFB1I1. Interacts with SRC, GRB2 and GRB7. Interacts with ARHGEF28. Interacts with SHB. Part of a complex composed of THSD1, PTK2/FAK1, TLN1 and VCL. Interacts with PXN and TLN1. Interacts with SORBS1. Interacts with STAT1. Interacts with WASL. Interacts with ARHGAP26 and SHC1. Interacts with RB1CC1; this inhibits PTK2/FAK1 activity and activation of downstream signaling pathways. Interacts with ARHGEF7. Interacts with MDM2. Interacts with PIAS1. Interacts with DCC. Interacts with LPXN (via LD motif 3). Interacts with MISP. Interacts with EMP2; regulates PTK2 activation and localization. Interacts with DSCAM. Interacts with AMBRA1. Interacts (when tyrosine-phosphorylated) with tensin TNS1; the interaction is increased by phosphorylation of TNS1. Post-translationally, phosphorylated on tyrosine residues upon activation, e.g. upon integrin signaling. Tyr-397 is the major autophosphorylation site, but other kinases can also phosphorylate this residue. Phosphorylation at Tyr-397 promotes interaction with SRC and SRC family members, leading to phosphorylation at Tyr-576, Tyr-577 and at additional tyrosine residues. FGR promotes phosphorylation at Tyr-397 and Tyr-576. FER promotes phosphorylation at Tyr-577, Tyr-861 and Tyr-928, even when cells are not adherent. Tyr-397, Tyr-576 and Ser-722 are phosphorylated only when cells are adherent. Phosphorylation at Tyr-397 is important for interaction with BMX, PIK3R1 and SHC1. Phosphorylation at Tyr-928 is important for interaction with GRB2. Dephosphorylated by PTPN11; PTPN11 is recruited to PTK2 via EPHA2 (tyrosine phosphorylated). Microtubule-induced dephosphorylation at Tyr-397 is crucial for the induction of focal adhesion disassembly; this dephosphorylation could be catalyzed by PTPN11 and regulated by ZFYVE21. Phosphorylation on tyrosine residues is enhanced by NTN1. Sumoylated; this enhances autophosphorylation.

It localises to the cell junction. Its subcellular location is the focal adhesion. The protein resides in the cell membrane. It is found in the cytoplasm. The protein localises to the perinuclear region. It localises to the cell cortex. Its subcellular location is the cytoskeleton. The protein resides in the microtubule organizing center. It is found in the centrosome. The protein localises to the nucleus. It localises to the cilium basal body. The catalysed reaction is L-tyrosyl-[protein] + ATP = O-phospho-L-tyrosyl-[protein] + ADP + H(+). With respect to regulation, subject to autoinhibition, mediated by interactions between the FERM domain and the kinase domain. Activated by autophosphorylation at Tyr-397. This promotes interaction with SRC and phosphorylation at Tyr-576 and Tyr-577 in the kinase activation loop by SRC. Phosphorylation at Tyr-397, Tyr-576 and Tyr-577 is required for maximal kinase activity. Non-receptor protein-tyrosine kinase that plays an essential role in regulating cell migration, adhesion, spreading, reorganization of the actin cytoskeleton, formation and disassembly of focal adhesions and cell protrusions, cell cycle progression, cell proliferation and apoptosis. Required for early embryonic development and placenta development. Required for embryonic angiogenesis, normal cardiomyocyte migration and proliferation, and normal heart development. Regulates axon growth and neuronal cell migration, axon branching and synapse formation; required for normal development of the nervous system. Plays a role in osteogenesis and differentiation of osteoblasts. Functions in integrin signal transduction, but also in signaling downstream of numerous growth factor receptors, G-protein coupled receptors (GPCR), EPHA2, netrin receptors and LDL receptors. Forms multisubunit signaling complexes with SRC and SRC family members upon activation; this leads to the phosphorylation of additional tyrosine residues, creating binding sites for scaffold proteins, effectors and substrates. Regulates numerous signaling pathways. Promotes activation of phosphatidylinositol 3-kinase and the AKT1 signaling cascade. Promotes activation of MAPK1/ERK2, MAPK3/ERK1 and the MAP kinase signaling cascade. Promotes localized and transient activation of guanine nucleotide exchange factors (GEFs) and GTPase-activating proteins (GAPs), and thereby modulates the activity of Rho family GTPases. Signaling via CAS family members mediates activation of RAC1. Phosphorylates NEDD9 following integrin stimulation. Recruits the ubiquitin ligase MDM2 to P53/TP53 in the nucleus, and thereby regulates P53/TP53 activity, P53/TP53 ubiquitination and proteasomal degradation. Phosphorylates SRC; this increases SRC kinase activity. Phosphorylates ACTN1, ARHGEF7, GRB7, RET and WASL. Promotes phosphorylation of PXN and STAT1; most likely PXN and STAT1 are phosphorylated by a SRC family kinase that is recruited to autophosphorylated PTK2/FAK1, rather than by PTK2/FAK1 itself. Promotes phosphorylation of BCAR1; GIT2 and SHC1; this requires both SRC and PTK2/FAK1. Promotes phosphorylation of BMX and PIK3R1. Functionally, does not contain a kinase domain and inhibits PTK2/FAK1 phosphorylation and signaling. Its enhanced expression can attenuate the nuclear accumulation of LPXN and limit its ability to enhance serum response factor (SRF)-dependent gene transcription. The chain is Focal adhesion kinase 1 from Rattus norvegicus (Rat).